Here is a 523-residue protein sequence, read N- to C-terminus: MCVPSRVIICLLRNDLRLHDNEVLHWAHRNADQIVPLYCFDPRHYVGTHYFNFPKTGPHRLKFLLESVRDLRITLKKKGSNLLLRRGKPEEVIEDLVKQLGNVSAVTLHEEATKEETDVESAVKQACTRLGIKYQTFWGSTLYHREDLPFRHISSLPDVYTQFRKAVETQGKVRPTFQMPDKLKPLPSGLEEGSVPSHEDFDQQDPLTDPRTAFPCSGGESQALQRLEHYFWETNLVASYKDTRNGLIGLDYSTKFAPWLALGCVSPRYIYEQIGKYEKERTANQSTYWVIFELLWRDYFRFVALKYGRRIFFLRGLQDKDIPWKRDPKLFDAWKEGRTGVPFVDANMRELAMTGFMSNRGRQNVASFLTKDLGIDWRMGAEWFEYLLVDYDVCSNYGNWLYSAGIGNDPRENRKFNMIKQGLDYDSGGDYIRLWVPELQQIKGGDAHTPWALSNASLAHANLSLGETYPYPIVMAPEWSRHINQKPAGSWEKSARRGKGPSHTPKQHKNRGIDFYFSRNKDV.

In terms of domain architecture, Photolyase/cryptochrome alpha/beta spans 6 to 142; it reads RVIICLLRND…KYQTFWGSTL (137 aa). 2 disordered regions span residues 174–211 and 486–523; these read RPTF…TDPR and KPAG…NKDV. Residues 496–510 show a composition bias toward basic residues; it reads RRGKGPSHTPKQHKN.

It belongs to the DNA photolyase class-1 family. FAD is required as a cofactor. (6R)-5,10-methylene-5,6,7,8-tetrahydrofolate serves as cofactor.

In terms of biological role, may have a photoreceptor function. Has weak cyclobutyl pyrimidine photolyase activity when expressed in E.coli and when tested in vitro. This is Cryptochrome DASH (cry-dash) from Xenopus laevis (African clawed frog).